The following is a 260-amino-acid chain: COP9 signalosome complex subunit 7 (260 aa).

In terms of domain architecture, PCI spans 1–159; that stretch reads MDIEQKQAEI…RCFEVPFAAG (159 aa). Residues 228–260 form a disordered region; the sequence is IRGNKEMFGEPSGVMDYEEDGIRPKRRRHPVTR. The span at 251–260 shows a compositional bias: basic residues; it reads PKRRRHPVTR.

This sequence belongs to the CSN7/EIF3M family. CSN7 subfamily. Component of the CSN complex, probably composed of CSN1, CSN2, CSN3, CSN4, CSN5 (CSN5A or CSN5B), CSN6 (CSN6A or CSN6B), CSN7 and CSN8. In the CSN complex, it probably interacts directly with CSN4. Interacts (via PCI domain) with CSN1 (via PCI domain) and CSN8 (via PCI domain), and (via C-terminal tail) with CSN6A, TSO2 and RNR2A. Cannot interact simultaneously with CSN1 and CSN8 to form ternary complexes. Also exists as a monomeric form. Binds to the translation initiation factors TIF3E1 and TIF3H1. In terms of processing, phosphorylated.

It is found in the cytoplasm. The protein localises to the nucleus. In terms of biological role, component of the COP9 signalosome complex (CSN), a complex involved in various cellular and developmental processes such as photomorphogenesis and auxin and jasmonate responses. The CSN complex is an essential regulator of the ubiquitin (Ubl) conjugation pathway by mediating the deneddylation of the cullin subunits of SCF-type E3 ligase complexes, leading to decrease the Ubl ligase activity of SCF. It is involved in repression of photomorphogenesis in darkness by regulating the activity of COP1-containing Ubl ligase complexes. The complex is also required for degradation of IAA6 by regulating the activity of the Ubl ligase SCF-TIR complex. Regulates the TSO2 subcellular localization. May be involved in nucleic acid binding. This chain is COP9 signalosome complex subunit 7 (CSN7), found in Arabidopsis thaliana (Mouse-ear cress).